The primary structure comprises 62 residues: Photosystem II reaction center protein Z (62 aa).

Transmembrane regions (helical) follow at residues 8–28 (AVFA…VVFA) and 41–61 (FSGT…NSLI).

Belongs to the PsbZ family. As to quaternary structure, PSII is composed of 1 copy each of membrane proteins PsbA, PsbB, PsbC, PsbD, PsbE, PsbF, PsbH, PsbI, PsbJ, PsbK, PsbL, PsbM, PsbT, PsbY, PsbZ, Psb30/Ycf12, at least 3 peripheral proteins of the oxygen-evolving complex and a large number of cofactors. It forms dimeric complexes.

It is found in the plastid. It localises to the chloroplast thylakoid membrane. Its function is as follows. May control the interaction of photosystem II (PSII) cores with the light-harvesting antenna, regulates electron flow through the 2 photosystem reaction centers. PSII is a light-driven water plastoquinone oxidoreductase, using light energy to abstract electrons from H(2)O, generating a proton gradient subsequently used for ATP formation. This Calycanthus floridus var. glaucus (Eastern sweetshrub) protein is Photosystem II reaction center protein Z.